Consider the following 277-residue polypeptide: Diaminopimelate epimerase (277 aa).

Residues asparagine 11 and asparagine 62 each contribute to the substrate site. Cysteine 71 serves as the catalytic Proton donor. Residues 72–73, asparagine 160, asparagine 193, and 211–212 each bind substrate; these read GN and ER. Catalysis depends on cysteine 220, which acts as the Proton acceptor. Position 221 to 222 (221 to 222) interacts with substrate; sequence GT.

The protein belongs to the diaminopimelate epimerase family. In terms of assembly, homodimer.

The protein localises to the cytoplasm. It carries out the reaction (2S,6S)-2,6-diaminopimelate = meso-2,6-diaminopimelate. It participates in amino-acid biosynthesis; L-lysine biosynthesis via DAP pathway; DL-2,6-diaminopimelate from LL-2,6-diaminopimelate: step 1/1. Functionally, catalyzes the stereoinversion of LL-2,6-diaminopimelate (L,L-DAP) to meso-diaminopimelate (meso-DAP), a precursor of L-lysine. In Methanococcus maripaludis (strain C6 / ATCC BAA-1332), this protein is Diaminopimelate epimerase.